The primary structure comprises 648 residues: Serine/threonine-protein kinase PrkC (648 aa).

At 1-330 (MLIGKRISGR…KKNGKRKKWP (330 aa)) the chain is on the cytoplasmic side. In terms of domain architecture, Protein kinase spans 11–271 (YQILRVIGGG…DMEADIKTAF (261 aa)). ATP contacts are provided by residues 17–25 (IGGGGMANV) and lysine 40. The active-site Proton acceptor is aspartate 134. Phosphothreonine; by autocatalysis is present on residues threonine 162, threonine 163, threonine 165, and threonine 167. Residue serine 214 is modified to Phosphoserine; by autocatalysis. Residues threonine 290, threonine 313, and threonine 320 each carry the phosphothreonine; by autocatalysis modification. A helical membrane pass occupies residues 331-351 (WVLLTICLVFITAGILAVTVF). Topologically, residues 352-648 (PSLFMPKDVK…YKTIEYPKDE (297 aa)) are extracellular. PASTA domains follow at residues 356–424 (MPKD…YKST), 425–492 (GKAK…TVSI), and 493–559 (GPED…TFSL).

It belongs to the protein kinase superfamily. Ser/Thr protein kinase family. In terms of assembly, homodimer. Autophosphorylation on threonine residue(s) and serine residue considerably increases the kinase activity of the protein. Dephosphorylated in vitro by PrpC.

Its subcellular location is the spore membrane. The enzyme catalyses L-seryl-[protein] + ATP = O-phospho-L-seryl-[protein] + ADP + H(+). It catalyses the reaction L-threonyl-[protein] + ATP = O-phospho-L-threonyl-[protein] + ADP + H(+). Its activity is regulated as follows. Bryostatin activates PrkC activity and induces germination, whereas staurosporine inhibits PrkC and significantly reduced peptidoglycan-dependent germination. Kinase activity of isolated N-terminus stimulated by poly-L-lysine or myelin basic protein. Its function is as follows. Protein kinase that is responsible for triggering spore germination in response to muropeptides, signaling bacteria to exit dormancy. PrkC is thus a germination receptor that binds peptidoglycan fragments containing m-Dpm (meso-diaminopimelate), which act as spore germinants. Autophosphorylates and phosphorylates EF-G (elongation factor G, fusA); the latter modification is likely necessary for germination in response to peptidoglycan. Another group did not detect phosphorylation of EF-G. PrkC is a substrate in vitro of the cotranscribed phosphatase PrpC, which suggests that they form a functional couple in vivo. Might also be involved in sporulation and biofilm formation. Does not seem to be involved in stress response. The sequence is that of Serine/threonine-protein kinase PrkC (prkC) from Bacillus subtilis (strain 168).